Consider the following 295-residue polypeptide: N-acetylmuramic acid 6-phosphate etherase (295 aa).

An SIS domain is found at 53–216 (AIQRFNNGGR…STMTMIGVGK (164 aa)). Glu81 acts as the Proton donor in catalysis. Glu112 is a catalytic residue.

Belongs to the GCKR-like family. MurNAc-6-P etherase subfamily. In terms of assembly, homodimer.

The enzyme catalyses N-acetyl-D-muramate 6-phosphate + H2O = N-acetyl-D-glucosamine 6-phosphate + (R)-lactate. It participates in amino-sugar metabolism; N-acetylmuramate degradation. Specifically catalyzes the cleavage of the D-lactyl ether substituent of MurNAc 6-phosphate, producing GlcNAc 6-phosphate and D-lactate. The polypeptide is N-acetylmuramic acid 6-phosphate etherase (Staphylococcus epidermidis (strain ATCC 35984 / DSM 28319 / BCRC 17069 / CCUG 31568 / BM 3577 / RP62A)).